Here is a 295-residue protein sequence, read N- to C-terminus: MEKLQFQGGARAIDEYAEYRRIVGDDDGGKLFTPEEYEEYKKTVLPMRLQNRLYVSWRSPTGMDCKLVGPETPCFCTHRYKQHKTDFQELPKERPLLLPCRVSKCACKSFHYIPLNGSRPIRCRCKHFADEHSVAGTYHCTQCTKCSGFHSSFTCGCSQPAYTHDTVVETKEERLAQGKPVGHDVPFAAMGGLTGFSSLAEGYMRLDESGAGAPSTSFLESSESGTSHPFLKMYYQPIKVQAVSEPSGIVTQVSNMRISEDDDMAYFERRYQERLLKEKEQKRQKNSKPPTTNRP.

The span at 272-283 (QERLLKEKEQKR) shows a compositional bias: basic and acidic residues. Residues 272–295 (QERLLKEKEQKRQKNSKPPTTNRP) form a disordered region.

It belongs to the FAM221 family.

The sequence is that of Protein FAM221A (fam221a) from Xenopus tropicalis (Western clawed frog).